The sequence spans 94 residues: Preprofallaxidin-9 (94 aa).

A signal peptide spans Met-1–Cys-22. A propeptide spanning residues Glu-23–Arg-46 is cleaved from the precursor. A disordered region spans residues Arg-27 to Arg-46. Over residues Glu-30 to Ser-42 the composition is skewed to acidic residues. Leu-62 carries the post-translational modification Leucine amide. Residues Ser-66–Arg-70 constitute a propeptide that is removed on maturation. Met-75 carries the post-translational modification Methionine amide. A propeptide spanning residues Ser-79–Arg-83 is cleaved from the precursor. Met-88 carries the post-translational modification Methionine amide. Residues Ser-92 to Glu-94 constitute a propeptide that is removed on maturation.

This sequence belongs to the frog skin active peptide (FSAP) family. Brevinin subfamily. Expressed by the skin glands.

The protein localises to the secreted. Fallaxidin-1.3 shows no antibacterial activity against Gram-positive or Gram-negative bacteria. Does not inhibit the formation of NO by neuronal nitric oxide synthase. Has no effect on splenocyte proliferation or smooth muscle contraction. In terms of biological role, fallaxidin-3.2 shows antibacterial activity against the Gram-positive bacteria E.faecalis (MIC=100 uM) and L.lactis (MIC=500 uM). No antibacterial activity against the Gram-positive bacteria B.cereus, L.innocua, M.luteus, S.epidermidis, S.uberis and S.aureus, or the Gram-negative bacteria E.cloacae and E.coli. In Litoria fallax (Eastern dwarf tree frog), this protein is Preprofallaxidin-9.